Consider the following 272-residue polypeptide: Ethanolamine ammonia-lyase small subunit (272 aa).

Positions 161, 182, and 211 each coordinate adenosylcob(III)alamin.

The protein belongs to the EutC family. The basic unit is a heterodimer which dimerizes to form tetramers. The heterotetramers trimerize; 6 large subunits form a core ring with 6 small subunits projecting outwards. Adenosylcob(III)alamin is required as a cofactor.

Its subcellular location is the bacterial microcompartment. It carries out the reaction ethanolamine = acetaldehyde + NH4(+). Its pathway is amine and polyamine degradation; ethanolamine degradation. Functionally, catalyzes the deamination of various vicinal amino-alcohols to oxo compounds. Allows this organism to utilize ethanolamine as the sole source of nitrogen and carbon in the presence of external vitamin B12. The protein is Ethanolamine ammonia-lyase small subunit of Pseudomonas putida (strain ATCC 47054 / DSM 6125 / CFBP 8728 / NCIMB 11950 / KT2440).